The chain runs to 570 residues: Small ribosomal subunit protein bS1 (570 aa).

6 consecutive S1 motif domains span residues 52–116, 134–199, 220–288, 305–375, 392–462, and 479–548; these read GAIL…LSRE, GSIV…VSRR, GERR…LGLK, GKRV…LGLK, GLRV…LGVK, and GSDI…LSIK.

Belongs to the bacterial ribosomal protein bS1 family.

Its function is as follows. Binds mRNA; thus facilitating recognition of the initiation point. It is needed to translate mRNA with a short Shine-Dalgarno (SD) purine-rich sequence. This chain is Small ribosomal subunit protein bS1 (rpsA), found in Chlamydia muridarum (strain MoPn / Nigg).